Here is an 89-residue protein sequence, read N- to C-terminus: Small ribosomal subunit protein uS15 (89 aa).

It belongs to the universal ribosomal protein uS15 family. In terms of assembly, part of the 30S ribosomal subunit. Forms a bridge to the 50S subunit in the 70S ribosome, contacting the 23S rRNA.

In terms of biological role, one of the primary rRNA binding proteins, it binds directly to 16S rRNA where it helps nucleate assembly of the platform of the 30S subunit by binding and bridging several RNA helices of the 16S rRNA. Its function is as follows. Forms an intersubunit bridge (bridge B4) with the 23S rRNA of the 50S subunit in the ribosome. This Allorhizobium ampelinum (strain ATCC BAA-846 / DSM 112012 / S4) (Agrobacterium vitis (strain S4)) protein is Small ribosomal subunit protein uS15.